The following is a 63-amino-acid chain: DNA-directed RNA polymerase subunit omega (63 aa).

This sequence belongs to the RNA polymerase subunit omega family. The RNAP catalytic core consists of 2 alpha, 1 beta, 1 beta' and 1 omega subunit. When a sigma factor is associated with the core the holoenzyme is formed, which can initiate transcription.

The catalysed reaction is RNA(n) + a ribonucleoside 5'-triphosphate = RNA(n+1) + diphosphate. Promotes RNA polymerase assembly. Latches the N- and C-terminal regions of the beta' subunit thereby facilitating its interaction with the beta and alpha subunits. This Blochmanniella pennsylvanica (strain BPEN) protein is DNA-directed RNA polymerase subunit omega.